Reading from the N-terminus, the 165-residue chain is Lipoprotein signal peptidase (165 aa).

The next 3 membrane-spanning stretches (helical) occupy residues 9–29 (SFLW…YFVV), 65–85 (WQKY…CYFL), and 100–120 (ALII…GFVV). Active-site residues include Asp121 and Asp139. Residues 134–154 (VFNVADIAISLGAGLMILDAF) traverse the membrane as a helical segment.

The protein belongs to the peptidase A8 family.

It localises to the cell inner membrane. The catalysed reaction is Release of signal peptides from bacterial membrane prolipoproteins. Hydrolyzes -Xaa-Yaa-Zaa-|-(S,diacylglyceryl)Cys-, in which Xaa is hydrophobic (preferably Leu), and Yaa (Ala or Ser) and Zaa (Gly or Ala) have small, neutral side chains.. It functions in the pathway protein modification; lipoprotein biosynthesis (signal peptide cleavage). In terms of biological role, this protein specifically catalyzes the removal of signal peptides from prolipoproteins. The polypeptide is Lipoprotein signal peptidase (Pasteurella multocida (strain Pm70)).